The sequence spans 519 residues: UvrABC system protein C (519 aa).

The GIY-YIG domain occupies 9-87; sequence HLPGCYLFKN…IKKHWPRYNI (79 aa). The 36-residue stretch at 191–226 folds into the UVR domain; the sequence is RELIESMEKDMRELASRQQFEQAMALRDEIAALEYL.

Belongs to the UvrC family. As to quaternary structure, interacts with UvrB in an incision complex.

Its subcellular location is the cytoplasm. The UvrABC repair system catalyzes the recognition and processing of DNA lesions. UvrC both incises the 5' and 3' sides of the lesion. The N-terminal half is responsible for the 3' incision and the C-terminal half is responsible for the 5' incision. This Methanosarcina barkeri (strain Fusaro / DSM 804) protein is UvrABC system protein C.